The chain runs to 494 residues: Leucine-rich repeat extensin-like protein 4 (494 aa).

Residues 1-25 form the signal peptide; that stretch reads MKNNTTQSLLLLLLFFFFFFEISHS. Residues Asn60, Asn94, and Asn106 are each glycosylated (N-linked (GlcNAc...) asparagine). LRR repeat units follow at residues 121 to 145, 146 to 168, 169 to 193, 194 to 217, 219 to 240, 242 to 263, 264 to 287, 289 to 311, and 312 to 335; these read IRTV…LGLL, TDLA…KFKQ, LKLL…VLHL, PSLK…LFSK, LDAI…FGDS, VSVI…LVEM, KNLN…IGRL, NVTV…VGGM, and VEVE…ICQL. A glycan (N-linked (GlcNAc...) asparagine) is linked at Asn289. Asn340 carries an N-linked (GlcNAc...) asparagine glycan. The tract at residues 404 to 494 is contains the Ser-Pro(4) repeats; it reads SPPIVALPPP…YASPPPPPFY (91 aa). Pro residues predominate over residues 422–479; that stretch reads PPVYSPPPSPPVFSPPPSPPVYSPPPPPSIHYSSPPPPPVHHSSPPPPSPEFEGPLPP. The disordered stretch occupies residues 422–482; it reads PPVYSPPPSP…FEGPLPPVIG (61 aa).

Hydroxylated on proline residues in the S-P-P-P-P repeat. Post-translationally, O-glycosylated on hydroxyprolines. In terms of tissue distribution, expressed in roots, stems, leaves and flowers, mostly in vascular tissues.

The protein localises to the secreted. The protein resides in the cell wall. In terms of biological role, modulates cell morphogenesis by regulating cell wall formation and assembly, and/or growth polarization. The sequence is that of Leucine-rich repeat extensin-like protein 4 (LRX4) from Arabidopsis thaliana (Mouse-ear cress).